A 335-amino-acid chain; its full sequence is Anthranilate phosphoribosyltransferase (335 aa).

5-phospho-alpha-D-ribose 1-diphosphate-binding positions include Gly-82, 85 to 86 (GD), Thr-90, 92 to 95 (NIST), 110 to 118 (KHGGRSVSS), and Ser-122. Residue Gly-82 coordinates anthranilate. Residue Ser-94 participates in Mg(2+) binding. Residue Arg-168 coordinates anthranilate. Mg(2+) contacts are provided by Asp-226 and Glu-227.

The protein belongs to the anthranilate phosphoribosyltransferase family. Homodimer. Mg(2+) is required as a cofactor.

It catalyses the reaction N-(5-phospho-beta-D-ribosyl)anthranilate + diphosphate = 5-phospho-alpha-D-ribose 1-diphosphate + anthranilate. It participates in amino-acid biosynthesis; L-tryptophan biosynthesis; L-tryptophan from chorismate: step 2/5. Functionally, catalyzes the transfer of the phosphoribosyl group of 5-phosphorylribose-1-pyrophosphate (PRPP) to anthranilate to yield N-(5'-phosphoribosyl)-anthranilate (PRA). The chain is Anthranilate phosphoribosyltransferase from Francisella philomiragia subsp. philomiragia (strain ATCC 25017 / CCUG 19701 / FSC 153 / O#319-036).